The chain runs to 146 residues: MIF-like protein mif-3 (146 aa).

Belongs to the MIF family.

The polypeptide is MIF-like protein mif-3 (mif-3) (Caenorhabditis elegans).